Reading from the N-terminus, the 732-residue chain is X-ray repair cross-complementing protein 5 (732 aa).

The VWFA domain occupies Ala9–Leu231. Positions Leu138 to Leu165 are leucine-zipper. At Lys144 the chain carries N6-acetyllysine. Residue Lys195 forms a Glycyl lysine isopeptide (Lys-Gly) (interchain with G-Cter in SUMO2) linkage. The region spanning Ile253 to Asn452 is the Ku domain. Phosphoserine is present on residues Ser255 and Ser258. Lys265 is subject to N6-acetyllysine. Ser318 bears the Phosphoserine mark. At Lys332 the chain carries N6-acetyllysine. Residues Lys532 and Lys534 each participate in a glycyl lysine isopeptide (Lys-Gly) (interchain with G-Cter in SUMO2) cross-link. Thr535 is modified (phosphothreonine). Glycyl lysine isopeptide (Lys-Gly) (interchain with G-Cter in SUMO2) cross-links involve residues Lys566 and Lys568. Ser577, Ser579, and Ser580 each carry phosphoserine; by PRKDC. N6-acetyllysine occurs at positions 660 and 665. Residues Lys669 and Lys688 each participate in a glycyl lysine isopeptide (Lys-Gly) (interchain with G-Cter in SUMO2) cross-link. The residue at position 715 (Thr715) is a Phosphothreonine; by PRKDC. An EEXXXDL motif motif is present at residues Glu720–Leu728.

It belongs to the ku80 family. As to quaternary structure, heterodimer composed of XRCC5/Ku80 and XRCC6/Ku70; heterodimerization stabilizes XRCC5 protein. Component of the core long-range non-homologous end joining (NHEJ) complex (also named DNA-PK complex) composed of PRKDC, LIG4, XRCC4, XRCC6/Ku70, XRCC5/Ku86 and NHEJ1/XLF. Additional component of the NHEJ complex includes PAXX. Following autophosphorylation, PRKDC dissociates from DNA, leading to formation of the short-range NHEJ complex, composed of LIG4, XRCC4, XRCC6/Ku70, XRCC5/Ku86 and NHEJ1/XLF. The XRCC5-XRCC6 dimer also associates with NAA15, and this complex displays DNA binding activity towards the osteocalcin FGF response element (OCFRE). In addition, XRCC5 binds to the osteoblast-specific transcription factors MSX2 and RUNX2. Interacts with ELF3. Interacts with APLF (via KBM motif). The XRCC5/XRCC6 dimer associates in a DNA-dependent manner with APEX1. Identified in a complex with DEAF1 and XRCC6. Interacts with NR4A3; the DNA-dependent protein kinase complex DNA-PK phosphorylates and activates NR4A3 and prevents NR4A3 ubiquitinylation and degradation. Interacts with RNF138. Interacts with CYREN isoform 1 (CYREN-1) and isoform 4 (CYREN-2) (via KBM motif). Interacts with WRN (via KBM motif). Interacts (via N-terminus) with HSF1 (via N-terminus); this interaction is direct and prevents XRCC5/XRCC6 heterodimeric binding and non-homologous end joining (NHEJ) repair activities induced by ionizing radiation (IR). Interacts with DHX9; this interaction occurs in a RNA-dependent manner. Part of the HDP-RNP complex composed of at least HEXIM1, PRKDC, XRCC5, XRCC6, paraspeckle proteins (SFPQ, NONO, PSPC1, RBM14, and MATR3) and NEAT1 RNA. Interacts with ERCC6. The XRCC5-XRCC6 dimer associates with ALKBH2. Interacts with TPRN; TPRN interacts with a number of DNA damage response proteins, is recruited to sites of DNA damage and may play a role in DNA damage repair. Interacts with ERCC6L2. In terms of assembly, (Microbial infection) Interacts with human T-cell leukemia virus 1/HTLV-1 protein HBZ. ADP-ribosylated by PARP3. In terms of processing, phosphorylated on serine residues. Phosphorylation by PRKDC may enhance helicase activity. Post-translationally, sumoylated. Ubiquitinated by RNF8 via 'Lys-48'-linked ubiquitination following DNA damage, leading to its degradation and removal from DNA damage sites. Ubiquitinated by RNF138, leading to remove the Ku complex from DNA breaks.

Its subcellular location is the nucleus. The protein resides in the nucleolus. The protein localises to the chromosome. Functionally, single-stranded DNA-dependent ATP-dependent helicase that plays a key role in DNA non-homologous end joining (NHEJ) by recruiting DNA-PK to DNA. Required for double-strand break repair and V(D)J recombination. Also has a role in chromosome translocation. The DNA helicase II complex binds preferentially to fork-like ends of double-stranded DNA in a cell cycle-dependent manner. It works in the 3'-5' direction. During NHEJ, the XRCC5-XRRC6 dimer performs the recognition step: it recognizes and binds to the broken ends of the DNA and protects them from further resection. Binding to DNA may be mediated by XRCC6. The XRCC5-XRRC6 dimer acts as a regulatory subunit of the DNA-dependent protein kinase complex DNA-PK by increasing the affinity of the catalytic subunit PRKDC to DNA by 100-fold. The XRCC5-XRRC6 dimer is probably involved in stabilizing broken DNA ends and bringing them together. The assembly of the DNA-PK complex to DNA ends is required for the NHEJ ligation step. The XRCC5-XRRC6 dimer probably also acts as a 5'-deoxyribose-5-phosphate lyase (5'-dRP lyase), by catalyzing the beta-elimination of the 5' deoxyribose-5-phosphate at an abasic site near double-strand breaks. XRCC5 probably acts as the catalytic subunit of 5'-dRP activity, and allows to 'clean' the termini of abasic sites, a class of nucleotide damage commonly associated with strand breaks, before such broken ends can be joined. The XRCC5-XRRC6 dimer together with APEX1 acts as a negative regulator of transcription. In association with NAA15, the XRCC5-XRRC6 dimer binds to the osteocalcin promoter and activates osteocalcin expression. As part of the DNA-PK complex, involved in the early steps of ribosome assembly by promoting the processing of precursor rRNA into mature 18S rRNA in the small-subunit processome. Binding to U3 small nucleolar RNA, recruits PRKDC and XRCC5/Ku86 to the small-subunit processome. Plays a role in the regulation of DNA virus-mediated innate immune response by assembling into the HDP-RNP complex, a complex that serves as a platform for IRF3 phosphorylation and subsequent innate immune response activation through the cGAS-STING pathway. The polypeptide is X-ray repair cross-complementing protein 5 (XRCC5) (Homo sapiens (Human)).